The following is a 1097-amino-acid chain: DNA-directed RNA polymerase subunit beta (1097 aa).

Residues 1072 to 1097 are disordered; it reads QDINPRRNTPSRPTYESLGTSEYEED. Residues 1077–1091 are compositionally biased toward polar residues; sequence RRNTPSRPTYESLGT.

It belongs to the RNA polymerase beta chain family. In terms of assembly, in cyanobacteria the RNAP catalytic core is composed of 2 alpha, 1 beta, 1 beta', 1 gamma and 1 omega subunit. When a sigma factor is associated with the core the holoenzyme is formed, which can initiate transcription.

The catalysed reaction is RNA(n) + a ribonucleoside 5'-triphosphate = RNA(n+1) + diphosphate. In terms of biological role, DNA-dependent RNA polymerase catalyzes the transcription of DNA into RNA using the four ribonucleoside triphosphates as substrates. This chain is DNA-directed RNA polymerase subunit beta, found in Prochlorococcus marinus (strain AS9601).